Reading from the N-terminus, the 319-residue chain is Probable arabinan endo-1,5-alpha-L-arabinosidase C (319 aa).

A signal peptide spans 1–16 (MFVYTLIFLFLAAANA). The Proton acceptor role is filled by Asp31. The N-linked (GlcNAc...) asparagine glycan is linked to Asn190. The Proton donor role is filled by Glu198. Residue Asn222 is glycosylated (N-linked (GlcNAc...) asparagine).

It belongs to the glycosyl hydrolase 43 family.

It localises to the secreted. The catalysed reaction is Endohydrolysis of (1-&gt;5)-alpha-arabinofuranosidic linkages in (1-&gt;5)-arabinans.. The protein operates within glycan metabolism; L-arabinan degradation. Its function is as follows. Endo-1,5-alpha-L-arabinanase involved in degradation of pectin. Its preferred substrate is linear 1,5-alpha-L-arabinan. This Aspergillus clavatus (strain ATCC 1007 / CBS 513.65 / DSM 816 / NCTC 3887 / NRRL 1 / QM 1276 / 107) protein is Probable arabinan endo-1,5-alpha-L-arabinosidase C (abnC).